Consider the following 411-residue polypeptide: Allantoate amidohydrolase (411 aa).

H81, D92, E127, and H190 together coordinate Zn(2+). The allantoate site is built by R215, N275, and R288. H382 is a binding site for Zn(2+).

This sequence belongs to the peptidase M20 family. Homodimer. Zn(2+) is required as a cofactor.

The protein localises to the cytoplasm. It carries out the reaction allantoate + H2O + 2 H(+) = (S)-2-ureidoglycine + NH4(+) + CO2. Its pathway is nitrogen metabolism; (S)-allantoin degradation. Its activity is regulated as follows. Sulfate could be an allosteric effector of the enzyme that is responsible for stabilizing substrate binding. In addition, this anion effector may act as a counterion during enzyme-mediated catalysis. In terms of biological role, involved in the anaerobic nitrogen utilization via the assimilation of allantoin. Catalyzes specifically the hydrolysis of allantoate to yield CO2, NH3 and S-ureidoglycine, which is unstable and readily undergoes a second deamination by S-ureidoglycine aminohydrolase AllE to yield S-ureidoglycolate and NH3. In vivo, the spontaneous release of S-ureidoglycolate and ammonia from S-ureidoglycine appears to be too slow to sustain an efficient flux of nitrogen. The sequence is that of Allantoate amidohydrolase from Escherichia coli (strain K12).